The primary structure comprises 486 residues: MTQFIEGKWTAGLGHEVTSINPANQEVIWNSKTATPEQVNTAVDAARNAQFDWFMLGFEARLAIVEAYRDQLEANKAEMAEVIAQETGKPQWETATEAGAMIGKIGLSVAAFHKRTGTSENDTPAGRAVLRHKPHGVVAVFGPYNFPGHLPNGHIVPALLAGNTVVFKPSELTPKVAELMLKLWEKAGLPAGVINLVQGEVETGKALASHPQIDGLFFTGSSRTGHILHQQYAGDPGKILALEMGGNNPLIIKGVEDTKAAVHDIIQSAYISSGQRCTCARRLYVEKGAAGDALLEQLAVAVNNIQVGAWNAQPQPFMGSMISETAAKGMVEAQRNLVNLGATPMVELTHLEAGTGLVSPGLIDVTDVIELPDEEYFGPLLQVVRYSDFDEAIKLANATRYGLSAGILADSREDYDYFLARIRAGIVNWNKQITGASGAAPFGGVGASGNHRASAFYAADYCAYPVASVEADAVSLPAKLSPGLSI.

Residue 220 to 225 participates in NAD(+) binding; the sequence is GSSRTG. Active-site residues include Glu243 and Cys277.

The protein belongs to the aldehyde dehydrogenase family. AstD subfamily.

The enzyme catalyses N-succinyl-L-glutamate 5-semialdehyde + NAD(+) + H2O = N-succinyl-L-glutamate + NADH + 2 H(+). Its pathway is amino-acid degradation; L-arginine degradation via AST pathway; L-glutamate and succinate from L-arginine: step 4/5. Catalyzes the NAD-dependent reduction of succinylglutamate semialdehyde into succinylglutamate. The chain is N-succinylglutamate 5-semialdehyde dehydrogenase from Shewanella piezotolerans (strain WP3 / JCM 13877).